A 342-amino-acid polypeptide reads, in one-letter code: Phosphate acyltransferase (342 aa).

The protein belongs to the PlsX family. In terms of assembly, homodimer. Probably interacts with PlsY.

Its subcellular location is the cytoplasm. It catalyses the reaction a fatty acyl-[ACP] + phosphate = an acyl phosphate + holo-[ACP]. It functions in the pathway lipid metabolism; phospholipid metabolism. Functionally, catalyzes the reversible formation of acyl-phosphate (acyl-PO(4)) from acyl-[acyl-carrier-protein] (acyl-ACP). This enzyme utilizes acyl-ACP as fatty acyl donor, but not acyl-CoA. The chain is Phosphate acyltransferase from Actinobacillus succinogenes (strain ATCC 55618 / DSM 22257 / CCUG 43843 / 130Z).